The primary structure comprises 308 residues: Taste receptor type 2 member 41 (308 aa).

Residues 1–7 (MLPTLSV) are Extracellular-facing. A helical membrane pass occupies residues 8–28 (FFMLTFVLLCFLGILANGFIV). Residues 29 to 60 (LMLSREWLLRGRLLPSDMILFSLGTSRFFQQC) are Cytoplasmic-facing. A helical transmembrane segment spans residues 61 to 81 (VGLVNSFYYFLHLVEYSGSLA). Residues 82–88 (RQLISLH) lie on the Extracellular side of the membrane. The chain crosses the membrane as a helical span at residues 89-109 (WDFLNSATFWFCTWLSVLFCI). Residues 110 to 128 (KIANFSHPAFLWLKWRFPA) lie on the Cytoplasmic side of the membrane. Residues 129 to 149 (LVPWFLLGSILVSVIVTLLFF) traverse the membrane as a helical segment. Topologically, residues 150–186 (WGNHTIYQAFLRRKFTGNTTFKEWNRRLEIDYFMPLK) are extracellular. 2 N-linked (GlcNAc...) asparagine glycosylation sites follow: asparagine 152 and asparagine 167. A helical membrane pass occupies residues 187 to 207 (VVTMSIPCSLFLVSILLLISS). Residues 208–239 (LRRHSLRMQHNTHSLQDPNVQAHSRALKSLIS) are Cytoplasmic-facing. A helical membrane pass occupies residues 240–260 (FLVLYAVSFVSMIIDATVFIS). At 261-264 (SDNV) the chain is on the extracellular side. A helical membrane pass occupies residues 265–285 (WYWPWQIILYFCMSVHPFILI). Over 286-308 (TNNLRFRGTFRQLLLLARGFWVA) the chain is Cytoplasmic.

Belongs to the G-protein coupled receptor T2R family. In terms of tissue distribution, expressed in subsets of taste receptor cells of the tongue and palate epithelium and exclusively in gustducin-positive cells.

The protein resides in the membrane. Receptor that may play a role in the perception of bitterness and is gustducin-linked. May play a role in sensing the chemical composition of the gastrointestinal content. The activity of this receptor may stimulate alpha gustducin, mediate PLC-beta-2 activation and lead to the gating of TRPM5. This is Taste receptor type 2 member 41 (Tas2r41) from Mus musculus (Mouse).